The sequence spans 412 residues: Probable tRNA sulfurtransferase (412 aa).

Residues aspartate 58–lysine 163 form the THUMP domain. Residues methionine 181 to leucine 182, histidine 206 to phenylalanine 207, arginine 265, glycine 287, and glutamine 296 contribute to the ATP site.

The protein belongs to the ThiI family.

The protein resides in the cytoplasm. The catalysed reaction is [ThiI sulfur-carrier protein]-S-sulfanyl-L-cysteine + a uridine in tRNA + 2 reduced [2Fe-2S]-[ferredoxin] + ATP + H(+) = [ThiI sulfur-carrier protein]-L-cysteine + a 4-thiouridine in tRNA + 2 oxidized [2Fe-2S]-[ferredoxin] + AMP + diphosphate. The enzyme catalyses [ThiS sulfur-carrier protein]-C-terminal Gly-Gly-AMP + S-sulfanyl-L-cysteinyl-[cysteine desulfurase] + AH2 = [ThiS sulfur-carrier protein]-C-terminal-Gly-aminoethanethioate + L-cysteinyl-[cysteine desulfurase] + A + AMP + 2 H(+). Its pathway is cofactor biosynthesis; thiamine diphosphate biosynthesis. Catalyzes the ATP-dependent transfer of a sulfur to tRNA to produce 4-thiouridine in position 8 of tRNAs, which functions as a near-UV photosensor. Also catalyzes the transfer of sulfur to the sulfur carrier protein ThiS, forming ThiS-thiocarboxylate. This is a step in the synthesis of thiazole, in the thiamine biosynthesis pathway. The sulfur is donated as persulfide by IscS. This chain is Probable tRNA sulfurtransferase, found in Acholeplasma laidlawii (strain PG-8A).